The primary structure comprises 70 residues: Deleted in esophageal cancer 1 (70 aa).

Expressed in many tissues, with highest expression in prostate and testis. Reduced expression in esophageal carcinomas.

Functionally, candidate tumor suppressor. This Homo sapiens (Human) protein is Deleted in esophageal cancer 1.